A 106-amino-acid polypeptide reads, in one-letter code: ATP-dependent Clp protease adapter protein ClpS (106 aa).

Residues 1–13 (MPRKTSHEHDHGL) are compositionally biased toward basic and acidic residues. Positions 1–21 (MPRKTSHEHDHGLVVETSKPE) are disordered.

Belongs to the ClpS family. Binds to the N-terminal domain of the chaperone ClpA.

Functionally, involved in the modulation of the specificity of the ClpAP-mediated ATP-dependent protein degradation. This is ATP-dependent Clp protease adapter protein ClpS from Xanthomonas campestris pv. campestris (strain 8004).